The following is a 588-amino-acid chain: Aspartate--tRNA ligase (588 aa).

E172 contributes to the L-aspartate binding site. Residues 196 to 199 (QLFK) form an aspartate region. R218 contributes to the L-aspartate binding site. ATP is bound by residues 218-220 (RDE) and Q227. H449 contacts L-aspartate. An ATP-binding site is contributed by E483. L-aspartate is bound at residue R490. An ATP-binding site is contributed by 535-538 (GLDR).

Belongs to the class-II aminoacyl-tRNA synthetase family. Type 1 subfamily. As to quaternary structure, homodimer.

The protein resides in the cytoplasm. The catalysed reaction is tRNA(Asp) + L-aspartate + ATP = L-aspartyl-tRNA(Asp) + AMP + diphosphate. Functionally, catalyzes the attachment of L-aspartate to tRNA(Asp) in a two-step reaction: L-aspartate is first activated by ATP to form Asp-AMP and then transferred to the acceptor end of tRNA(Asp). This Haemophilus influenzae (strain PittGG) protein is Aspartate--tRNA ligase.